Consider the following 335-residue polypeptide: Large ribosomal subunit protein uL10 (335 aa).

A disordered region spans residues 304–335 (GAAAPVEEAPVEEKKEEKKEEAAAPAGLGMLF). Over residues 314–325 (VEEKKEEKKEEA) the composition is skewed to basic and acidic residues.

Belongs to the universal ribosomal protein uL10 family. Part of the 50S ribosomal subunit. Homodimer, it forms part of the ribosomal stalk which helps the ribosome interact with GTP-bound translation factors. Forms both a pentameric L10(L12)2(L12)2 and heptameric L10(L12)2(L12)2(L12)2 complex, where L10 forms an elongated spine to which the L12 dimers bind in a sequential fashion. The proportion of heptameric complexes increases during cell growth.

Its function is as follows. Forms part of the ribosomal stalk, playing a central role in the interaction of the ribosome with GTP-bound translation factors. The protein is Large ribosomal subunit protein uL10 of Methanococcus maripaludis (strain DSM 14266 / JCM 13030 / NBRC 101832 / S2 / LL).